Consider the following 801-residue polypeptide: K(+)-insensitive pyrophosphate-energized proton pump (801 aa).

5 consecutive transmembrane segments (helical) span residues 27–47, 81–101, 109–129, 170–190, and 201–221; these read VIVM…GILV, TLGV…ADDW, VFFL…MWLA, GVVG…VVLV, and GFGL…GIFT. Lys222 is a substrate binding site. The Mg(2+) site is built by Asp225, Asp229, Asn252, and Asp255. 7 helical membrane-spanning segments follow: residues 261-281, 292-312, 328-348, 372-392, 406-426, 429-449, and 453-473; these read AGMA…ALIL, AFPL…IFAV, GFFV…YVYL, ILAM…QQLT, IGKS…SVGL, AVYT…LGGT, and LALF…GVIV. Asp483 is a binding site for Mg(2+). 4 helical membrane-spanning segments follow: residues 515 to 535, 571 to 591, 641 to 661, and 663 to 683; these read AITK…LFGS, VGLI…INAV, LLAV…ALGA, and LAGA…SGGA. Residues Asp685, Asp711, and Asp715 each coordinate Ca(2+). Residue Lys718 coordinates substrate. Helical transmembrane passes span 724 to 744 and 754 to 774; these read AINP…PAVV and LGVR…AVYI.

The protein belongs to the H(+)-translocating pyrophosphatase (TC 3.A.10) family. K(+)-insensitive subfamily. In terms of assembly, homodimer. Mg(2+) serves as cofactor.

It localises to the cell membrane. The enzyme catalyses diphosphate + H2O + H(+)(in) = 2 phosphate + 2 H(+)(out). Functionally, proton pump that utilizes the energy of pyrophosphate hydrolysis as the driving force for proton movement across the membrane. Generates a proton motive force. The chain is K(+)-insensitive pyrophosphate-energized proton pump from Streptomyces avermitilis (strain ATCC 31267 / DSM 46492 / JCM 5070 / NBRC 14893 / NCIMB 12804 / NRRL 8165 / MA-4680).